The sequence spans 925 residues: Coronin-7 (925 aa).

WD repeat units follow at residues 75-115, 124-163, 166-205, and 209-253; these read CHSD…QALP, PEDLPVEVLQFHPTSDGILVSAAGTTVKVWDAAKQQPLTE, AHGDLVQSAVWSRDGALVGTACKDKQLRIFDPRTKPQASQ, and AHEN…SALA. 2 disordered regions span residues 196 to 216 and 399 to 465; these read DPRTKPQASQSTQAHENSRDS and LVPP…SLQS. Residues 201 to 210 are compositionally biased toward polar residues; it reads PQASQSTQAH. Positions 429 to 460 are enriched in low complexity; sequence SSPPSSLTSPSTPSSLGPTLSSTSGIGTGPSL. 2 positions are modified to phosphoserine: Ser-462 and Ser-465. Lys-472 participates in a covalent cross-link: Glycyl lysine isopeptide (Lys-Gly) (interchain with G-Cter in ubiquitin). WD repeat units lie at residues 542 to 582, 592 to 632, and 635 to 674; these read QNGA…LEEV, GHME…DRLK, and GHQDQIFSLAWSPDGQQLATVCKDGRVRVYRPRSGPEPLQ. A Glycyl lysine isopeptide (Lys-Gly) (interchain with G-Cter in ubiquitin) cross-link involves residue Lys-680. The WD 8 repeat unit spans residues 728-768; sequence DVAPSTLVPSYEPRHWPGAPDWQGDARVFLYELLPESPFFM. The segment at 857–925 is disordered; sequence LQPPDMSPVS…FEGVDEDEWD (69 aa). Positions 866 to 882 are enriched in low complexity; sequence SQAPREAPARRAPSSAQ. Over residues 884–896 the composition is skewed to basic and acidic residues; the sequence is LEEKSDQQKKEEL. Ser-915 is subject to Phosphoserine.

Belongs to the WD repeat coronin family. Interacts with clathrin adapter AP1 complex. This interaction takes place at Golgi membranes and not AP1-positive endosomal membranes. Interacts (when ubiquitinated at Lys-472) with EPS15. In terms of processing, the membrane-associated form is phosphorylated on tyrosine residues. Ubiquitinated via 'Lys-33'-linked ubiquitin chains by the BCR(KLHL20) E3 ubiquitin ligase complex: 'Lys-33'-linked ubiquitination promotes interaction with EPS15 and facilitates actin polymerization at the trans-Golgi network, thereby facilitating post-Golgi trafficking. Deubiquitinated by ZRANB1/TRABID.

The protein localises to the golgi apparatus membrane. Its subcellular location is the golgi apparatus. It localises to the trans-Golgi network. The protein resides in the cytoplasmic vesicle. It is found in the cytoplasm. The protein localises to the cytosol. Its function is as follows. F-actin regulator involved in anterograde Golgi to endosome transport: upon ubiquitination via 'Lys-33'-linked ubiquitin chains by the BCR(KLHL20) E3 ubiquitin ligase complex, interacts with EPS15 and localizes to the trans-Golgi network, where it promotes actin polymerization, thereby facilitating post-Golgi trafficking. May play a role in the maintenance of the Golgi apparatus morphology. The protein is Coronin-7 (CORO7) of Pongo abelii (Sumatran orangutan).